The sequence spans 613 residues: DNA mismatch repair protein MutL (613 aa).

Residues 364-393 form a disordered region; that stretch reads EPAVARQPEAPRYSSGASAPRPTGANYPHA.

Belongs to the DNA mismatch repair MutL/HexB family.

In terms of biological role, this protein is involved in the repair of mismatches in DNA. It is required for dam-dependent methyl-directed DNA mismatch repair. May act as a 'molecular matchmaker', a protein that promotes the formation of a stable complex between two or more DNA-binding proteins in an ATP-dependent manner without itself being part of a final effector complex. This is DNA mismatch repair protein MutL from Enterobacter sp. (strain 638).